The following is a 276-amino-acid chain: MKQQILQEMRVLVTINEEIEIKRRINFIKKKLQQAECYTLVLGISGGVDSSTAGRLCQLAVEQLNQSTDTDKYQFIAVRLPYAIQKDEDEAQLALQFIRPSHVITINIKNGADGIHESTLAALQTSSVNLSADTNIDFIKGNVKARMRMIAQYEIAGLTGGLVVGTDHSAENITGFYTKHGDGACDLAPLFGLNKRQIRALAKQLGAPAILIEKAPTADLEEDKPQLQDEHALGITYDQIDDFLEGKAVTQEIEDKLIAIYLRTQHKRQAVPTIYD.

43–50 contributes to the ATP binding site; the sequence is GISGGVDS. Aspartate 49 is a Mg(2+) binding site. Residue arginine 146 coordinates deamido-NAD(+). Threonine 166 serves as a coordination point for ATP. Glutamate 171 contributes to the Mg(2+) binding site. Residues lysine 179 and aspartate 186 each coordinate deamido-NAD(+). Lysine 195 and threonine 217 together coordinate ATP. A deamido-NAD(+)-binding site is contributed by 266–267; the sequence is HK.

This sequence belongs to the NAD synthetase family. In terms of assembly, homodimer.

The catalysed reaction is deamido-NAD(+) + NH4(+) + ATP = AMP + diphosphate + NAD(+) + H(+). It functions in the pathway cofactor biosynthesis; NAD(+) biosynthesis; NAD(+) from deamido-NAD(+) (ammonia route): step 1/1. In terms of biological role, catalyzes the ATP-dependent amidation of deamido-NAD to form NAD. Uses ammonia as a nitrogen source. The protein is NH(3)-dependent NAD(+) synthetase of Psychromonas ingrahamii (strain DSM 17664 / CCUG 51855 / 37).